The primary structure comprises 256 residues: Imidazole glycerol phosphate synthase subunit HisF (256 aa).

Catalysis depends on residues D12 and D131.

This sequence belongs to the HisA/HisF family. In terms of assembly, heterodimer of HisH and HisF.

It localises to the cytoplasm. It catalyses the reaction 5-[(5-phospho-1-deoxy-D-ribulos-1-ylimino)methylamino]-1-(5-phospho-beta-D-ribosyl)imidazole-4-carboxamide + L-glutamine = D-erythro-1-(imidazol-4-yl)glycerol 3-phosphate + 5-amino-1-(5-phospho-beta-D-ribosyl)imidazole-4-carboxamide + L-glutamate + H(+). Its pathway is amino-acid biosynthesis; L-histidine biosynthesis; L-histidine from 5-phospho-alpha-D-ribose 1-diphosphate: step 5/9. In terms of biological role, IGPS catalyzes the conversion of PRFAR and glutamine to IGP, AICAR and glutamate. The HisF subunit catalyzes the cyclization activity that produces IGP and AICAR from PRFAR using the ammonia provided by the HisH subunit. This is Imidazole glycerol phosphate synthase subunit HisF from Pseudomonas fluorescens (strain ATCC BAA-477 / NRRL B-23932 / Pf-5).